The following is a 349-amino-acid chain: Protein-glutamate methylesterase/protein-glutamine glutaminase (349 aa).

The 118-residue stretch at 5-122 (RVLSVDDSAL…REGMLAYSEM (118 aa)) folds into the Response regulatory domain. D56 carries the 4-aspartylphosphate modification. The CheB-type methylesterase domain occupies 152–344 (LLSSEKLIAI…QQMLAKISAG (193 aa)). Catalysis depends on residues S164, H190, and D286.

It belongs to the CheB family. In terms of processing, phosphorylated by CheA. Phosphorylation of the N-terminal regulatory domain activates the methylesterase activity.

It localises to the cytoplasm. The enzyme catalyses [protein]-L-glutamate 5-O-methyl ester + H2O = L-glutamyl-[protein] + methanol + H(+). It carries out the reaction L-glutaminyl-[protein] + H2O = L-glutamyl-[protein] + NH4(+). In terms of biological role, involved in chemotaxis. Part of a chemotaxis signal transduction system that modulates chemotaxis in response to various stimuli. Catalyzes the demethylation of specific methylglutamate residues introduced into the chemoreceptors (methyl-accepting chemotaxis proteins or MCP) by CheR. Also mediates the irreversible deamidation of specific glutamine residues to glutamic acid. The protein is Protein-glutamate methylesterase/protein-glutamine glutaminase of Salmonella paratyphi A (strain ATCC 9150 / SARB42).